A 309-amino-acid polypeptide reads, in one-letter code: Porphobilinogen deaminase (309 aa).

C242 bears the S-(dipyrrolylmethanemethyl)cysteine mark.

It belongs to the HMBS family. Monomer. It depends on dipyrromethane as a cofactor.

It carries out the reaction 4 porphobilinogen + H2O = hydroxymethylbilane + 4 NH4(+). It functions in the pathway porphyrin-containing compound metabolism; protoporphyrin-IX biosynthesis; coproporphyrinogen-III from 5-aminolevulinate: step 2/4. In terms of biological role, tetrapolymerization of the monopyrrole PBG into the hydroxymethylbilane pre-uroporphyrinogen in several discrete steps. In Pseudoalteromonas atlantica (strain T6c / ATCC BAA-1087), this protein is Porphobilinogen deaminase.